A 167-amino-acid polypeptide reads, in one-letter code: Small ribosomal subunit protein uS5 (167 aa).

In terms of domain architecture, S5 DRBM spans 19 to 82; it reads LTEKVLHINR…EAARKNMISC (64 aa).

Belongs to the universal ribosomal protein uS5 family. Part of the 30S ribosomal subunit. Contacts proteins S4 and S8.

In terms of biological role, with S4 and S12 plays an important role in translational accuracy. Functionally, located at the back of the 30S subunit body where it stabilizes the conformation of the head with respect to the body. This chain is Small ribosomal subunit protein uS5, found in Protochlamydia amoebophila (strain UWE25).